A 300-amino-acid polypeptide reads, in one-letter code: Actin-related protein 2/3 complex subunit 2-B (300 aa).

The protein belongs to the ARPC2 family. In terms of assembly, component of the Arp2/3 complex composed of actr2/arp2, actr3/arp3, arpc1 (arpc1a or arpc1b), arpc2, arpc3, arpc4 and arpc5.

Its subcellular location is the cytoplasm. The protein localises to the cytoskeleton. It is found in the cell projection. It localises to the nucleus. Functionally, actin-binding component of the Arp2/3 complex, a multiprotein complex that mediates actin polymerization upon stimulation by nucleation-promoting factor (NPF). The Arp2/3 complex mediates the formation of branched actin networks in the cytoplasm, providing the force for cell motility. In addition to its role in the cytoplasmic cytoskeleton, the Arp2/3 complex also promotes actin polymerization in the nucleus, thereby regulating gene transcription and repair of damaged DNA. The Arp2/3 complex promotes homologous recombination (HR) repair in response to DNA damage by promoting nuclear actin polymerization, leading to drive motility of double-strand breaks (DSBs). The protein is Actin-related protein 2/3 complex subunit 2-B (arpc2-b) of Xenopus laevis (African clawed frog).